A 122-amino-acid chain; its full sequence is Large ribosomal subunit protein uL14 (122 aa).

Belongs to the universal ribosomal protein uL14 family. As to quaternary structure, part of the 50S ribosomal subunit. Forms a cluster with proteins L3 and L19. In the 70S ribosome, L14 and L19 interact and together make contacts with the 16S rRNA in bridges B5 and B8.

Binds to 23S rRNA. Forms part of two intersubunit bridges in the 70S ribosome. The chain is Large ribosomal subunit protein uL14 from Syntrophomonas wolfei subsp. wolfei (strain DSM 2245B / Goettingen).